The sequence spans 379 residues: Inositol 3-kinase (379 aa).

ATP contacts are provided by residues serine 217, glycine 267–aspartate 270, and asparagine 294. Aspartate 270 functions as the Proton acceptor in the catalytic mechanism.

Belongs to the carbohydrate kinase pfkB family.

The catalysed reaction is myo-inositol + ATP = 1D-myo-inositol 3-phosphate + ADP + H(+). Functionally, kinase that phosphorylates myo-inositol to produce multiple myo-inositol monophosphates, Ins(1)P, Ins(3)P, Ins(4)P, Ins(5)P and Ins(6)P. Participates in phytic acid biosynthesis in developing seeds. Phytic acid is the primary storage form of phosphorus in cereal grains and other plant seeds. The sequence is that of Inositol 3-kinase from Zea mays (Maize).